The chain runs to 96 residues: Small ribosomal subunit protein bS20 (96 aa).

Positions 1 to 27 are disordered; sequence MAKQEVAAKKVKRPTALKRDLQNKKKR.

It belongs to the bacterial ribosomal protein bS20 family.

Binds directly to 16S ribosomal RNA. The chain is Small ribosomal subunit protein bS20 from Protochlamydia amoebophila (strain UWE25).